The primary structure comprises 231 residues: ATP phosphoribosyltransferase (231 aa).

The protein belongs to the ATP phosphoribosyltransferase family. Short subfamily. As to quaternary structure, heteromultimer composed of HisG and HisZ subunits.

The protein resides in the cytoplasm. The enzyme catalyses 1-(5-phospho-beta-D-ribosyl)-ATP + diphosphate = 5-phospho-alpha-D-ribose 1-diphosphate + ATP. The protein operates within amino-acid biosynthesis; L-histidine biosynthesis; L-histidine from 5-phospho-alpha-D-ribose 1-diphosphate: step 1/9. Catalyzes the condensation of ATP and 5-phosphoribose 1-diphosphate to form N'-(5'-phosphoribosyl)-ATP (PR-ATP). Has a crucial role in the pathway because the rate of histidine biosynthesis seems to be controlled primarily by regulation of HisG enzymatic activity. In Psychrobacter arcticus (strain DSM 17307 / VKM B-2377 / 273-4), this protein is ATP phosphoribosyltransferase.